The following is a 565-amino-acid chain: Hemagglutinin-neuraminidase (565 aa).

The Intravirion segment spans residues 1-19; the sequence is MVAEDAPVRATCRVLFRTT. A helical transmembrane segment spans residues 20-40; the sequence is TLIFLCTLLALSISILYESLI. Residues 41 to 565 are Virion surface-facing; it reads TQKQIMSQAG…VPFIRQVTLS (525 aa). Asparagine 139 is a glycosylation site (N-linked (GlcNAc...) asparagine; by host). Cystine bridges form between cysteine 161-cysteine 185, cysteine 175-cysteine 236, and cysteine 227-cysteine 240. Residues 223-228 are involved in neuraminidase activity; it reads NRKSCS. A glycan (N-linked (GlcNAc...) asparagine; by host) is linked at asparagine 267. Disulfide bonds link cysteine 333–cysteine 454, cysteine 365–cysteine 375, and cysteine 448–cysteine 458. N-linked (GlcNAc...) asparagine; by host glycosylation is present at asparagine 504. Cysteines 528 and 539 form a disulfide.

It belongs to the paramyxoviruses hemagglutinin-neuraminidase family. In terms of assembly, homotetramer; composed of disulfide-linked homodimers. Interacts with F protein trimer.

It is found in the virion membrane. The protein resides in the host cell membrane. It catalyses the reaction Hydrolysis of alpha-(2-&gt;3)-, alpha-(2-&gt;6)-, alpha-(2-&gt;8)- glycosidic linkages of terminal sialic acid residues in oligosaccharides, glycoproteins, glycolipids, colominic acid and synthetic substrates.. Its function is as follows. Attaches the virus to sialic acid-containing cell receptors and thereby initiating infection. Binding of HN protein to the receptor induces a conformational change that allows the F protein to trigger virion/cell membranes fusion. Neuraminidase activity ensures the efficient spread of the virus by dissociating the mature virions from the neuraminic acid containing glycoproteins. In Canis lupus familiaris (Dog), this protein is Hemagglutinin-neuraminidase (HN).